We begin with the raw amino-acid sequence, 73 residues long: Small ribosomal subunit protein uS15c (73 aa).

Belongs to the universal ribosomal protein uS15 family. In terms of assembly, part of the 30S ribosomal subunit.

Its subcellular location is the plastid. The protein localises to the chloroplast. The chain is Small ribosomal subunit protein uS15c (rps15) from Welwitschia mirabilis (Tree tumbo).